A 616-amino-acid polypeptide reads, in one-letter code: Chaperone protein HtpG (616 aa).

Residues Met1–Arg333 form an a; substrate-binding region. Residues Glu334–Lys542 form a b region. A c region spans residues Ile543–Leu616.

This sequence belongs to the heat shock protein 90 family. In terms of assembly, homodimer.

It localises to the cytoplasm. In terms of biological role, molecular chaperone. Has ATPase activity. The chain is Chaperone protein HtpG from Borreliella burgdorferi (strain ATCC 35210 / DSM 4680 / CIP 102532 / B31) (Borrelia burgdorferi).